Consider the following 475-residue polypeptide: Ankyrin repeat, SAM and basic leucine zipper domain-containing protein 1 (475 aa).

A disordered region spans residues 1–24 (MAASALRGPPVAGGGESSESEDDG). Phosphoserine occurs at positions 17, 18, and 20. ANK repeat units lie at residues 45 to 74 (EKKE…SVDS), 78 to 107 (YGWT…NASF), 110 to 144 (DKQS…DPNV), 148 to 177 (RLMT…EVNT), 181 to 210 (NGYT…NKML), and 214 to 243 (DGKM…PLEG). Positions 272–334 (SYTAFGDLEV…KILAALKELQ (63 aa)) constitute an SAM domain.

In terms of assembly, interacts with DDX4, PIWIL1, RANBP9 and TDRD1.

It is found in the cytoplasm. In terms of biological role, plays a central role during spermatogenesis by repressing transposable elements and preventing their mobilization, which is essential for the germline integrity. Acts via the piRNA metabolic process, which mediates the repression of transposable elements during meiosis by forming complexes composed of piRNAs and Piwi proteins and governs the methylation and subsequent repression of transposons. Its association with pi-bodies suggests a participation in the primary piRNAs metabolic process. Required prior to the pachytene stage to facilitate the production of multiple types of piRNAs, including those associated with repeats involved in the regulation of retrotransposons. May act by mediating protein-protein interactions during germ cell maturation. The sequence is that of Ankyrin repeat, SAM and basic leucine zipper domain-containing protein 1 (ASZ1) from Gorilla gorilla gorilla (Western lowland gorilla).